A 39-amino-acid polypeptide reads, in one-letter code: Decorsin (39 aa).

The interval 27–38 (CRFPRGDADPYC) is high affinity binding domain. The short motif at 31-33 (RGD) is the Cell attachment site element.

This sequence belongs to the ornatin family.

It localises to the secreted. In terms of biological role, inhibits fibrinogen interaction with platelet receptors expressed on glycoprotein IIb-IIIa complex. May prevent blood from clotting during either feeding and/or storage of ingested blood. The polypeptide is Decorsin (Macrobdella decora (North American leech)).